The primary structure comprises 513 residues: Pantetheinase (513 aa).

The first 21 residues, 1 to 21 (MTTQLPAYVAILLFYVSRASC), serve as a signal peptide directing secretion. An N-linked (GlcNAc...) asparagine glycan is attached at Asn38. The 268-residue stretch at 39–306 (ATLTPVSREE…GKLLLSQLDS (268 aa)) folds into the CN hydrolase domain. The active-site Proton acceptor is Glu79. Asn130 carries N-linked (GlcNAc...) asparagine glycosylation. Lys178 (proton donor) is an active-site residue. Residue Asn200 is glycosylated (N-linked (GlcNAc...) asparagine). Cys211 acts as the Nucleophile in catalysis. 3 N-linked (GlcNAc...) asparagine glycosylation sites follow: Asn283, Asn315, and Asn353. Gly491 carries GPI-anchor amidated glycine lipidation. Positions 492 to 513 (LTAQARIIMLIVIAPIVCSLSW) are cleaved as a propeptide — removed in mature form.

Belongs to the carbon-nitrogen hydrolase superfamily. BTD/VNN family. As to quaternary structure, monomer. Widely expressed with higher expression in spleen, kidney and blood. Overexpressed in lesional psoriatic skin.

Its subcellular location is the cell membrane. The catalysed reaction is (R)-pantetheine + H2O = cysteamine + (R)-pantothenate. Functionally, amidohydrolase that hydrolyzes specifically one of the carboamide linkages in D-pantetheine thus recycling pantothenic acid (vitamin B5) and releasing cysteamine. The polypeptide is Pantetheinase (VNN1) (Homo sapiens (Human)).